A 160-amino-acid polypeptide reads, in one-letter code: 6,7-dimethyl-8-ribityllumazine synthase (160 aa).

Residues phenylalanine 28, 62-64 (ALE), and 86-88 (AVI) contribute to the 5-amino-6-(D-ribitylamino)uracil site. A (2S)-2-hydroxy-3-oxobutyl phosphate-binding site is contributed by 91 to 92 (ET). The active-site Proton donor is histidine 94. A 5-amino-6-(D-ribitylamino)uracil-binding site is contributed by asparagine 119. Arginine 133 contributes to the (2S)-2-hydroxy-3-oxobutyl phosphate binding site.

This sequence belongs to the DMRL synthase family.

It catalyses the reaction (2S)-2-hydroxy-3-oxobutyl phosphate + 5-amino-6-(D-ribitylamino)uracil = 6,7-dimethyl-8-(1-D-ribityl)lumazine + phosphate + 2 H2O + H(+). It participates in cofactor biosynthesis; riboflavin biosynthesis; riboflavin from 2-hydroxy-3-oxobutyl phosphate and 5-amino-6-(D-ribitylamino)uracil: step 1/2. Its function is as follows. Catalyzes the formation of 6,7-dimethyl-8-ribityllumazine by condensation of 5-amino-6-(D-ribitylamino)uracil with 3,4-dihydroxy-2-butanone 4-phosphate. This is the penultimate step in the biosynthesis of riboflavin. This is 6,7-dimethyl-8-ribityllumazine synthase from Nitrosospira multiformis (strain ATCC 25196 / NCIMB 11849 / C 71).